The primary structure comprises 289 residues: Nucleotide-binding protein FRAAL4592 (289 aa).

13–20 (GLSGAGRS) is an ATP binding site. 64-67 (DVRG) contributes to the GTP binding site.

It belongs to the RapZ-like family.

Functionally, displays ATPase and GTPase activities. This chain is Nucleotide-binding protein FRAAL4592, found in Frankia alni (strain DSM 45986 / CECT 9034 / ACN14a).